The chain runs to 176 residues: Isopentenyl-diphosphate Delta-isomerase (176 aa).

Residues histidine 23 and histidine 29 each contribute to the Mn(2+) site. The Nudix hydrolase domain maps to 27–161; the sequence is LRHLAISVFV…PERFTPWLKI (135 aa). Cysteine 63 is an active-site residue. Cysteine 63 contacts Mg(2+). Residue histidine 65 coordinates Mn(2+). Glutamate 83 is a binding site for Mg(2+). Residues glutamate 109 and glutamate 111 each coordinate Mn(2+). Residue glutamate 111 is part of the active site.

This sequence belongs to the IPP isomerase type 1 family. Mg(2+) serves as cofactor. Requires Mn(2+) as cofactor.

The protein resides in the cytoplasm. It carries out the reaction isopentenyl diphosphate = dimethylallyl diphosphate. Its pathway is isoprenoid biosynthesis; dimethylallyl diphosphate biosynthesis; dimethylallyl diphosphate from isopentenyl diphosphate: step 1/1. It functions in the pathway porphyrin-containing compound metabolism; chlorophyll biosynthesis. Functionally, catalyzes the 1,3-allylic rearrangement of the homoallylic substrate isopentenyl (IPP) to its highly electrophilic allylic isomer, dimethylallyl diphosphate (DMAPP). The chain is Isopentenyl-diphosphate Delta-isomerase from Rhodobacter capsulatus (strain ATCC BAA-309 / NBRC 16581 / SB1003).